The sequence spans 326 residues: Pancreas transcription factor 1 subunit alpha (326 aa).

The 53-residue stretch at 162 to 214 (QLRQAANVRERRRMQSINDAFEGLRSHIPTLPYEKRLSKVDTLRLAIGYINFL) folds into the bHLH domain. The span at 229-240 (TGGCGGPGGSRH) shows a compositional bias: gly residues. Disordered stretches follow at residues 229–249 (TGGCGGPGGSRHLGGDSPGNQ) and 304–326 (DPRKLNSKSFDNIENEPPFEFVS).

Component of the pancreas transcription factor 1 complex (PTF1) which is composed of TCF3/p75, TCF12/p64 and PTF1A/p48. TCF3 is responsible for the nuclear import of the p48/p64 complex. Interacts with TCF3 and RBPSUH/RBP-Jkappa. In terms of tissue distribution, exocrine pancreas-specific. Expressed in azaserine-induced pancreatic tumors (at protein level). Expressed in AR42J cells but not in ARIP, DSL6A, or DSL6B cells. Down-regulation is associated with the change of an azaserine-induced acinar cell carcinoma to a ductal phenotype.

It localises to the nucleus. The protein resides in the cytoplasm. Functionally, transcription factor implicated in the cell fate determination in various organs. Binds to the E-box consensus sequence 5'-CANNTG-3'. Plays a role in early and late pancreas development and differentiation. Important for determining whether cells allocated to the pancreatic buds continue towards pancreatic organogenesis or revert back to duodenal fates. May be involved in the maintenance of exocrine pancreas-specific gene expression including ELA1 and amylase. Required for the formation of pancreatic acinar and ductal cells. Plays an important role in cerebellar development. Directly regulated by FOXN4 and RORC during retinal development, FOXN4-PTF1A pathway plays a central role in directing the differentiation of retinal progenitors towards horizontal and amacrine fates. The polypeptide is Pancreas transcription factor 1 subunit alpha (Ptf1a) (Rattus norvegicus (Rat)).